The sequence spans 280 residues: Chaperone for lacto-N-biosidase (280 aa).

Positions 1–37 are cleaved as a signal peptide; that stretch reads MPRRHRFAAAIAAVAVAAVLLVTLTVAVVTHGDGAFA.

As to quaternary structure, homodimer.

Its subcellular location is the secreted. Its function is as follows. Chaperone required for active expression of the lacto-N-biosidase LnbX. The chain is Chaperone for lacto-N-biosidase from Bifidobacterium longum subsp. longum (strain ATCC 15707 / DSM 20219 / JCM 1217 / NCTC 11818 / E194b).